A 272-amino-acid chain; its full sequence is Endoplasmic reticulum resident protein 27 (272 aa).

The N-terminal stretch at 1–25 (MKITRSRCLILSFVLVCGLVPEVTA) is a signal peptide. Residues 39–152 (EPIWLTDVPA…WVTEYSPMIA (114 aa)) enclose the Thioredoxin domain. 2 N-linked (GlcNAc...) asparagine glycosylation sites follow: N91 and N100. Residues 230-233 (DKWD) form a PDIA3-binding site region. Residues 269-272 (KEEL) carry the Prevents secretion from ER motif.

This sequence belongs to the protein disulfide isomerase family. Interacts with PDIA3.

It localises to the endoplasmic reticulum lumen. Functionally, specifically binds unfolded proteins and may recruit protein disulfide isomerase PDIA3 to unfolded substrates. Binds protein substrates via a hydrophobic pocket in the C-terminal domain. May play a role in the unfolded stress response. This Mus musculus (Mouse) protein is Endoplasmic reticulum resident protein 27 (Erp27).